We begin with the raw amino-acid sequence, 105 residues long: Urease subunit beta (105 aa).

It belongs to the urease beta subunit family. Heterotrimer of UreA (gamma), UreB (beta) and UreC (alpha) subunits. Three heterotrimers associate to form the active enzyme.

The protein resides in the cytoplasm. It carries out the reaction urea + 2 H2O + H(+) = hydrogencarbonate + 2 NH4(+). The protein operates within nitrogen metabolism; urea degradation; CO(2) and NH(3) from urea (urease route): step 1/1. The protein is Urease subunit beta of Pseudomonas putida (strain W619).